The primary structure comprises 918 residues: Interleukin-6 receptor subunit beta (918 aa).

Residues 1–22 (MSALRIWLMQALLIFLTTESIG) form the signal peptide. Residues 23-618 (QLVEPCGYIY…TLKFAQGEIE (596 aa)) lie on the Extracellular side of the membrane. An Ig-like C2-type domain is found at 26–120 (EPCGYIYPEF…IEQNVYGITI (95 aa)). 2 cysteine pairs are disulfide-bonded: Cys-28–Cys-54 and Cys-48–Cys-103. Residues Asn-43, Asn-61, Asn-83, and Asn-131 are each glycosylated (N-linked (GlcNAc...) asparagine). Fibronectin type-III domains are found at residues 125–215 (PPDI…NFDP), 223–323 (PPHN…TYED), 328–418 (APSF…IPGS), 422–516 (ASHP…LKQA), and 518–612 (PSKG…TLKF). Cys-134 and Cys-144 are joined by a disulfide. Residue Asn-157 is glycosylated (N-linked (GlcNAc...) asparagine). A disulfide bond links Cys-172 and Cys-181. 2 N-linked (GlcNAc...) asparagine glycosylation sites follow: Asn-205 and Asn-226. The WSXWS motif motif lies at 309 to 313 (WSDWS). Asn-382 and Asn-389 each carry an N-linked (GlcNAc...) asparagine glycan. Cys-457 and Cys-465 form a disulfide bridge. Residues Asn-477 and Asn-552 are each glycosylated (N-linked (GlcNAc...) asparagine). A helical transmembrane segment spans residues 619 to 640 (AIVVPVCLAFLLTTLLGVLFCF). Topologically, residues 641 to 918 (NKRDLIKKHI…TVRQGGYMPQ (278 aa)) are cytoplasmic. Residues 650–658 (IWPNVPDPS) carry the Box 1 motif motif. Disordered regions lie at residues 659–679 (KSHI…NSKD), 720–754 (TEGH…STAS), 773–795 (VQVF…PEDL), and 817–842 (SCSQ…GSEE). Phosphoserine is present on residues Ser-660 and Ser-666. Positions 730–751 (SSCMSSSRPSISSSEENESAQS) are enriched in low complexity. Positions 773–785 (VQVFSRSESTQPL) are enriched in polar residues. A phosphoserine mark is found at Ser-781, Ser-788, Ser-828, and Ser-838.

This sequence belongs to the type I cytokine receptor family. Type 2 subfamily. Component of a hexamer of two molecules each of IL6, IL6R and IL6ST; associates with the complex IL6:IL6R but does not interact with IL6. Forms heterodimers composed of LIFR and IL6ST (type I OSM receptor) which are activated by LIF and OSM. Also forms heterodimers composed of OSMR and IL6ST (type II receptor) which are activated by OSM but not by LIF. Interacts with HCK. Interacts with INPP5D/SHIP1. Interacts with SRC and YES. Interacts with ARMH4; this interaction prevents IL6ST protein homodimerization and bridges ARMH4 with IL6R and STAT3 and therefore inhibits phosphorylation of STAT3 at 'Tyr-705'. In terms of processing, phosphorylation of Ser-781 down-regulates cell surface expression. Post-translationally, heavily N-glycosylated. Glycosylation is required for protein stability and localization in plasma membrane but not for ligand binding. In terms of tissue distribution, found in hepatocytes, astrocytes, fibroblasts and endothelial cells.

It localises to the cell membrane. Signal-transducing molecule. The receptor systems for IL6, LIF, OSM, CNTF, IL11, CTF1 and BSF3 can utilize IL6ST for initiating signal transmission. Binding of IL6 to IL6R induces IL6ST homodimerization and formation of a high-affinity receptor complex, which activates the intracellular JAK-MAPK and JAK-STAT3 signaling pathways. That causes phosphorylation of IL6ST tyrosine residues which in turn activates STAT3. In parallel, the IL6 signaling pathway induces the expression of two cytokine receptor signaling inhibitors, SOCS1 and SOCS3, which inhibit JAK and terminate the activity of the IL6 signaling pathway as a negative feedback loop. Also activates the yes-associated protein 1 (YAP) and NOTCH pathways to control inflammation-induced epithelial regeneration, independently of STAT3. Mediates signals which regulate immune response, hematopoiesis, pain control and bone metabolism. Has a role in embryonic development. Essential for survival of motor and sensory neurons and for differentiation of astrocytes. Required for expression of TRPA1 in nociceptive neurons. Required for the maintenance of PTH1R expression in the osteoblast lineage and for the stimulation of PTH-induced osteoblast differentiation. Required for normal trabecular bone mass and cortical bone composition. The polypeptide is Interleukin-6 receptor subunit beta (Rattus norvegicus (Rat)).